Consider the following 261-residue polypeptide: Cytochrome c oxidase subunit 3 (261 aa).

The Mitochondrial matrix portion of the chain corresponds to 1–15 (MAHQAHAYHMVDPSP). A helical transmembrane segment spans residues 16–34 (WPLTGAVAALLLTSGLAIW). At 35-40 (FPFNSL) the chain is on the mitochondrial intermembrane side. A helical membrane pass occupies residues 41–66 (ILLTLGLVLLLLTMYQWWRDIVREGT). Residues 67–72 (FQGHHT) lie on the Mitochondrial matrix side of the membrane. The helical transmembrane segment at 73–105 (PPVQKGLRYGMILFITSEVFFFLGFFWAFYHSS) threads the bilayer. The Mitochondrial intermembrane segment spans residues 106–128 (LAPTPELGGCWPPTGIVPLNPFE). A helical membrane pass occupies residues 129–152 (VPLLNTAVLLASGVTVTWAHHSIM). The Mitochondrial matrix portion of the chain corresponds to 153 to 155 (EGE). The helical transmembrane segment at 156–183 (RKQAIHSLTLTILLGFYFTFLQAMEYYE) threads the bilayer. At 184 to 190 (APFTIAD) the chain is on the mitochondrial intermembrane side. A helical membrane pass occupies residues 191–223 (GVYGSTFFVATGFHGLHVIIGSTFLAICLLRQI). Over 224–232 (RYHFTSEHH) the chain is Mitochondrial matrix. The helical transmembrane segment at 233 to 256 (FGFEAAAWYWHFVDVVWLFLYISI) threads the bilayer. Residues 257–261 (YWWGS) are Mitochondrial intermembrane-facing.

Belongs to the cytochrome c oxidase subunit 3 family. As to quaternary structure, component of the cytochrome c oxidase (complex IV, CIV), a multisubunit enzyme composed of 14 subunits. The complex is composed of a catalytic core of 3 subunits MT-CO1, MT-CO2 and MT-CO3, encoded in the mitochondrial DNA, and 11 supernumerary subunits COX4I, COX5A, COX5B, COX6A, COX6B, COX6C, COX7A, COX7B, COX7C, COX8 and NDUFA4, which are encoded in the nuclear genome. The complex exists as a monomer or a dimer and forms supercomplexes (SCs) in the inner mitochondrial membrane with NADH-ubiquinone oxidoreductase (complex I, CI) and ubiquinol-cytochrome c oxidoreductase (cytochrome b-c1 complex, complex III, CIII), resulting in different assemblies (supercomplex SCI(1)III(2)IV(1) and megacomplex MCI(2)III(2)IV(2)).

It localises to the mitochondrion inner membrane. It carries out the reaction 4 Fe(II)-[cytochrome c] + O2 + 8 H(+)(in) = 4 Fe(III)-[cytochrome c] + 2 H2O + 4 H(+)(out). In terms of biological role, component of the cytochrome c oxidase, the last enzyme in the mitochondrial electron transport chain which drives oxidative phosphorylation. The respiratory chain contains 3 multisubunit complexes succinate dehydrogenase (complex II, CII), ubiquinol-cytochrome c oxidoreductase (cytochrome b-c1 complex, complex III, CIII) and cytochrome c oxidase (complex IV, CIV), that cooperate to transfer electrons derived from NADH and succinate to molecular oxygen, creating an electrochemical gradient over the inner membrane that drives transmembrane transport and the ATP synthase. Cytochrome c oxidase is the component of the respiratory chain that catalyzes the reduction of oxygen to water. Electrons originating from reduced cytochrome c in the intermembrane space (IMS) are transferred via the dinuclear copper A center (CU(A)) of subunit 2 and heme A of subunit 1 to the active site in subunit 1, a binuclear center (BNC) formed by heme A3 and copper B (CU(B)). The BNC reduces molecular oxygen to 2 water molecules using 4 electrons from cytochrome c in the IMS and 4 protons from the mitochondrial matrix. The chain is Cytochrome c oxidase subunit 3 (mt-co3) from Tetraodon nigroviridis (Spotted green pufferfish).